We begin with the raw amino-acid sequence, 107 residues long: Protein KleE (107 aa).

The polypeptide is Protein KleE (kleE) (Escherichia coli).